The following is a 298-amino-acid chain: Pantothenate synthetase (298 aa).

ATP is bound at residue 30–37 (MGNLHEGH). H37 functions as the Proton donor in the catalytic mechanism. Q61 contacts (R)-pantoate. Q61 provides a ligand contact to beta-alanine. 149–152 (GEKD) provides a ligand contact to ATP. Q155 is a binding site for (R)-pantoate. ATP is bound by residues V178 and 186–189 (MSSR).

The protein belongs to the pantothenate synthetase family. In terms of assembly, homodimer.

The protein localises to the cytoplasm. The catalysed reaction is (R)-pantoate + beta-alanine + ATP = (R)-pantothenate + AMP + diphosphate + H(+). It functions in the pathway cofactor biosynthesis; (R)-pantothenate biosynthesis; (R)-pantothenate from (R)-pantoate and beta-alanine: step 1/1. Catalyzes the condensation of pantoate with beta-alanine in an ATP-dependent reaction via a pantoyl-adenylate intermediate. The chain is Pantothenate synthetase from Aliivibrio salmonicida (strain LFI1238) (Vibrio salmonicida (strain LFI1238)).